The sequence spans 472 residues: Na(+)/H(+) antiporter NhaA (472 aa).

11 helical membrane-spanning segments follow: residues 48–68 (AGGI…NSAW), 91–111 (MSLH…VVGL), 129–149 (ALPV…YFAV), 157–177 (AGWG…LVLL), 185–205 (LIIF…LVIA), 210–230 (HEIS…LLLL), 237–257 (HAIP…HSGV), 337–357 (GPWV…GIDF), 374–394 (VCLG…WIAV), 410–430 (LLGV…ISQL), and 443–463 (LGIL…LYFG).

Belongs to the NhaA Na(+)/H(+) (TC 2.A.33) antiporter family.

It localises to the cell inner membrane. The enzyme catalyses Na(+)(in) + 2 H(+)(out) = Na(+)(out) + 2 H(+)(in). Na(+)/H(+) antiporter that extrudes sodium in exchange for external protons. The chain is Na(+)/H(+) antiporter NhaA from Syntrophobacter fumaroxidans (strain DSM 10017 / MPOB).